Consider the following 215-residue polypeptide: Large ribosomal subunit protein uL4 (215 aa).

The segment at 46-72 is disordered; it reads TAKSKNRAEVSGGGRKPWAQKGGGRAR. Positions 56–71 are enriched in gly residues; the sequence is SGGGRKPWAQKGGGRA.

Belongs to the universal ribosomal protein uL4 family. In terms of assembly, part of the 50S ribosomal subunit.

In terms of biological role, one of the primary rRNA binding proteins, this protein initially binds near the 5'-end of the 23S rRNA. It is important during the early stages of 50S assembly. It makes multiple contacts with different domains of the 23S rRNA in the assembled 50S subunit and ribosome. Its function is as follows. Forms part of the polypeptide exit tunnel. This is Large ribosomal subunit protein uL4 from Helicobacter pylori (strain J99 / ATCC 700824) (Campylobacter pylori J99).